Consider the following 535-residue polypeptide: Peptide chain release factor 3 (535 aa).

In terms of domain architecture, tr-type G spans 8–277 (KRRRTFAIIS…TLVELAPPPG (270 aa)). Residues 17 to 24 (SHPDAGKT), 85 to 89 (DTPGH), and 139 to 142 (NKLD) each bind GTP.

Belongs to the TRAFAC class translation factor GTPase superfamily. Classic translation factor GTPase family. PrfC subfamily.

The protein localises to the cytoplasm. Increases the formation of ribosomal termination complexes and stimulates activities of RF-1 and RF-2. It binds guanine nucleotides and has strong preference for UGA stop codons. It may interact directly with the ribosome. The stimulation of RF-1 and RF-2 is significantly reduced by GTP and GDP, but not by GMP. This is Peptide chain release factor 3 from Nitrosomonas europaea (strain ATCC 19718 / CIP 103999 / KCTC 2705 / NBRC 14298).